A 215-amino-acid polypeptide reads, in one-letter code: Phosphatidylserine decarboxylase proenzyme (215 aa).

The active-site Schiff-base intermediate with substrate; via pyruvic acid is Ser-184. Pyruvic acid (Ser); by autocatalysis is present on Ser-184.

It belongs to the phosphatidylserine decarboxylase family. PSD-A subfamily. Heterodimer of a large membrane-associated beta subunit and a small pyruvoyl-containing alpha subunit. Pyruvate serves as cofactor. Post-translationally, is synthesized initially as an inactive proenzyme. Formation of the active enzyme involves a self-maturation process in which the active site pyruvoyl group is generated from an internal serine residue via an autocatalytic post-translational modification. Two non-identical subunits are generated from the proenzyme in this reaction, and the pyruvate is formed at the N-terminus of the alpha chain, which is derived from the carboxyl end of the proenzyme. The post-translation cleavage follows an unusual pathway, termed non-hydrolytic serinolysis, in which the side chain hydroxyl group of the serine supplies its oxygen atom to form the C-terminus of the beta chain, while the remainder of the serine residue undergoes an oxidative deamination to produce ammonia and the pyruvoyl prosthetic group on the alpha chain.

It is found in the cell membrane. It catalyses the reaction a 1,2-diacyl-sn-glycero-3-phospho-L-serine + H(+) = a 1,2-diacyl-sn-glycero-3-phosphoethanolamine + CO2. Its pathway is phospholipid metabolism; phosphatidylethanolamine biosynthesis; phosphatidylethanolamine from CDP-diacylglycerol: step 2/2. Its function is as follows. Catalyzes the formation of phosphatidylethanolamine (PtdEtn) from phosphatidylserine (PtdSer). The chain is Phosphatidylserine decarboxylase proenzyme from Ralstonia pickettii (strain 12J).